The primary structure comprises 389 residues: S-adenosylmethionine synthase (389 aa).

H17 is an ATP binding site. D19 lines the Mg(2+) pocket. A K(+)-binding site is contributed by E45. Residues E58 and Q101 each coordinate L-methionine. Positions 101–111 (QSPDISQGVTE) are flexible loop. ATP is bound by residues 168-170 (DSK), 234-235 (RF), D243, 249-250 (RK), A266, and K270. D243 is an L-methionine binding site. Residue K274 participates in L-methionine binding.

This sequence belongs to the AdoMet synthase family. Homotetramer; dimer of dimers. Requires Mg(2+) as cofactor. K(+) serves as cofactor.

The protein localises to the cytoplasm. The enzyme catalyses L-methionine + ATP + H2O = S-adenosyl-L-methionine + phosphate + diphosphate. The protein operates within amino-acid biosynthesis; S-adenosyl-L-methionine biosynthesis; S-adenosyl-L-methionine from L-methionine: step 1/1. In terms of biological role, catalyzes the formation of S-adenosylmethionine (AdoMet) from methionine and ATP. The overall synthetic reaction is composed of two sequential steps, AdoMet formation and the subsequent tripolyphosphate hydrolysis which occurs prior to release of AdoMet from the enzyme. In Geobacter metallireducens (strain ATCC 53774 / DSM 7210 / GS-15), this protein is S-adenosylmethionine synthase.